The chain runs to 431 residues: Glutamate-1-semialdehyde 2,1-aminomutase 1 (431 aa).

Lysine 268 is modified (N6-(pyridoxal phosphate)lysine).

The protein belongs to the class-III pyridoxal-phosphate-dependent aminotransferase family. HemL subfamily. As to quaternary structure, homodimer. The cofactor is pyridoxal 5'-phosphate.

The protein localises to the cytoplasm. The catalysed reaction is (S)-4-amino-5-oxopentanoate = 5-aminolevulinate. It functions in the pathway porphyrin-containing compound metabolism; protoporphyrin-IX biosynthesis; 5-aminolevulinate from L-glutamyl-tRNA(Glu): step 2/2. The protein is Glutamate-1-semialdehyde 2,1-aminomutase 1 of Anoxybacillus flavithermus (strain DSM 21510 / WK1).